Consider the following 253-residue polypeptide: Flagellar brake protein YcgR (253 aa).

The region spanning 120-239 is the PilZ domain; the sequence is QRRDFYRFAT…NEGLINRYVY (120 aa).

Belongs to the YcgR family. Monomer. Interacts with the flagellar basal bodies.

The protein resides in the bacterial flagellum basal body. Functionally, acts as a flagellar brake, regulating swimming and swarming in a bis-(3'-5') cyclic diguanylic acid (c-di-GMP)-dependent manner. Binds 1 c-di-GMP dimer per subunit. Increasing levels of c-di-GMP lead to decreased motility. The chain is Flagellar brake protein YcgR from Methylotenera mobilis (strain JLW8 / ATCC BAA-1282 / DSM 17540).